Reading from the N-terminus, the 347-residue chain is NADH-ubiquinone oxidoreductase chain 2 (347 aa).

11 helical membrane-spanning segments follow: residues 3–23 (PLIFPIIMLTIMLGTLIVMIS), 25–45 (HWLMIWMGFEMNMLAVIPVLM), 59–79 (YFLTQATASMLLMLAIVINLL), 96–116 (IIMTLALTMKLGLAPFHFWVP), 122–142 (VSLTSGLVLLTWQKLAPLSVL), 145–165 (IAPVINSDLILTMSILSIMIG), 178–198 (ILAYSSIAHMGWMTSVLIFNP), 202–222 (LLNLLLYILMTSTTFALFMTV), 240–260 (ITTSILIMMLSLGGLPPLTGF), 276–296 (IILATLMAIAALLSLFFYMRL), and 326–346 (LSPLIILSTLTLPLAPAMMIL).

The protein belongs to the complex I subunit 2 family. Core subunit of respiratory chain NADH dehydrogenase (Complex I) which is composed of 45 different subunits. Interacts with TMEM242.

Its subcellular location is the mitochondrion inner membrane. The enzyme catalyses a ubiquinone + NADH + 5 H(+)(in) = a ubiquinol + NAD(+) + 4 H(+)(out). Its function is as follows. Core subunit of the mitochondrial membrane respiratory chain NADH dehydrogenase (Complex I) which catalyzes electron transfer from NADH through the respiratory chain, using ubiquinone as an electron acceptor. Essential for the catalytic activity and assembly of complex I. The protein is NADH-ubiquinone oxidoreductase chain 2 of Peropteryx macrotis (Lesser dog-like bat).